A 238-amino-acid chain; its full sequence is Ribosomal RNA small subunit methyltransferase G (238 aa).

Residues Gly106, Leu111, 157-158 (IE), and Arg170 contribute to the S-adenosyl-L-methionine site.

It belongs to the methyltransferase superfamily. RNA methyltransferase RsmG family.

It localises to the cytoplasm. The enzyme catalyses guanosine(527) in 16S rRNA + S-adenosyl-L-methionine = N(7)-methylguanosine(527) in 16S rRNA + S-adenosyl-L-homocysteine. Specifically methylates the N7 position of guanine in position 527 of 16S rRNA. The sequence is that of Ribosomal RNA small subunit methyltransferase G from Psychrobacter arcticus (strain DSM 17307 / VKM B-2377 / 273-4).